The following is a 343-amino-acid chain: Aspartate carbamoyltransferase catalytic subunit (343 aa).

2 residues coordinate carbamoyl phosphate: Arg91 and Thr92. Lys119 contacts L-aspartate. 3 residues coordinate carbamoyl phosphate: Arg141, His171, and Gln174. Positions 204 and 259 each coordinate L-aspartate. Carbamoyl phosphate-binding residues include Gly300 and Pro301.

This sequence belongs to the aspartate/ornithine carbamoyltransferase superfamily. ATCase family. In terms of assembly, heterododecamer (2C3:3R2) of six catalytic PyrB chains organized as two trimers (C3), and six regulatory PyrI chains organized as three dimers (R2).

The enzyme catalyses carbamoyl phosphate + L-aspartate = N-carbamoyl-L-aspartate + phosphate + H(+). Its pathway is pyrimidine metabolism; UMP biosynthesis via de novo pathway; (S)-dihydroorotate from bicarbonate: step 2/3. In terms of biological role, catalyzes the condensation of carbamoyl phosphate and aspartate to form carbamoyl aspartate and inorganic phosphate, the committed step in the de novo pyrimidine nucleotide biosynthesis pathway. The chain is Aspartate carbamoyltransferase catalytic subunit from Burkholderia ambifaria (strain MC40-6).